The chain runs to 365 residues: Peptide chain release factor 2 (365 aa).

Residue Gln251 is modified to N5-methylglutamine.

Belongs to the prokaryotic/mitochondrial release factor family. Methylated by PrmC. Methylation increases the termination efficiency of RF2.

It localises to the cytoplasm. Peptide chain release factor 2 directs the termination of translation in response to the peptide chain termination codons UGA and UAA. The protein is Peptide chain release factor 2 of Aliarcobacter butzleri (strain RM4018) (Arcobacter butzleri).